A 287-amino-acid chain; its full sequence is Uroplakin-3a (287 aa).

The N-terminal stretch at 1–18 (MPPLWALLALGCLRFGSA) is a signal peptide. At 19-207 (VNLQPQLASV…DTWPGRRSGG (189 aa)) the chain is on the lumenal side. 3 N-linked (GlcNAc...) asparagine glycosylation sites follow: Asn74, Asn139, and Asn170. Residues 208–235 (MIVITSILGSLPFFLLVGFAGAIALSLV) traverse the membrane as a helical segment. Residues 236-287 (DMGSSDGETTHDSQITQEAVPKSLGASESSYTSVNRGPPLDRAEVYSSKLQD) lie on the Cytoplasmic side of the membrane. A disordered region spans residues 242-287 (GETTHDSQITQEAVPKSLGASESSYTSVNRGPPLDRAEVYSSKLQD). Positions 261–270 (ASESSYTSVN) are enriched in polar residues.

This sequence belongs to the uroplakin-3 family. Heterodimer with uroplakin-1B (UPK1B). Expressed in ureter.

The protein localises to the endoplasmic reticulum membrane. Component of the asymmetric unit membrane (AUM); a highly specialized biomembrane elaborated by terminally differentiated urothelial cells. May play an important role in AUM-cytoskeleton interaction in terminally differentiated urothelial cells. It also contributes to the formation of urothelial glycocalyx which may play an important role in preventing bacterial adherence. The polypeptide is Uroplakin-3a (UPK3A) (Homo sapiens (Human)).